Consider the following 393-residue polypeptide: Beta-1,4-galactosyltransferase 3 (393 aa).

The Cytoplasmic portion of the chain corresponds to 1 to 10 (MLRRLLERPC). Residues 11–31 (TLALLVGSQLAVMMYLSLGGF) traverse the membrane as a helical; Signal-anchor for type II membrane protein segment. The Lumenal segment spans residues 32–393 (RSLSALFGRD…ANHTALRGSH (362 aa)). Residue Asn57 is glycosylated (N-linked (GlcNAc...) asparagine). Cysteines 77 and 119 form a disulfide. 130-134 (PHRAR) contacts UDP-alpha-D-galactose. Asn166 carries an N-linked (GlcNAc...) asparagine glycan. UDP-alpha-D-galactose-binding positions include 169 to 171 (FNR), 196 to 197 (VD), Tyr226, and Trp258. A disulfide bridge connects residues Cys190 and Cys209. Position 197 (Asp197) interacts with Mn(2+). An N-acetyl-D-glucosamine-binding site is contributed by 260–263 (GEDD). Residue His291 participates in Mn(2+) binding. 291 to 293 (HRG) provides a ligand contact to UDP-alpha-D-galactose. Arg303 is a binding site for N-acetyl-D-glucosamine. N-linked (GlcNAc...) asparagine glycosylation is found at Asn337 and Asn385. Residues 339–393 (TADIGTDPRGPRAPSGPRYPPGSSQAFRQEMLQRRPPARPGPLSTANHTALRGSH) form a disordered region.

This sequence belongs to the glycosyltransferase 7 family. It depends on Mn(2+) as a cofactor. As to expression, found in various tissues. Highest expression in placenta, prostate, testis, ovary, intestine and muscle, and in fetal brain.

It is found in the golgi apparatus. It localises to the golgi stack membrane. It catalyses the reaction an N-acetyl-beta-D-glucosaminyl derivative + UDP-alpha-D-galactose = a beta-D-galactosyl-(1-&gt;4)-N-acetyl-beta-D-glucosaminyl derivative + UDP + H(+). The enzyme catalyses N-acetyl-D-glucosamine + UDP-alpha-D-galactose = beta-D-galactosyl-(1-&gt;4)-N-acetyl-D-glucosamine + UDP + H(+). The catalysed reaction is a beta-D-GlcNAc-(1-&gt;3)-beta-D-Gal-(1-&gt;4)-beta-D-Glc-(1&lt;-&gt;1)-Cer(d18:1(4E)) + UDP-alpha-D-galactose = a neolactoside nLc4Cer(d18:1(4E)) + UDP + H(+). It carries out the reaction a beta-D-glucosylceramide + UDP-alpha-D-galactose = a beta-D-galactosyl-(1-&gt;4)-beta-D-glucosyl-(1&lt;-&gt;1)-ceramide + UDP + H(+). It catalyses the reaction a neolactoside IV(3)-beta-GlcNAc-nLc4Cer + UDP-alpha-D-galactose = a neolactoside nLc6Cer + UDP + H(+). It functions in the pathway protein modification; protein glycosylation. Functionally, responsible for the synthesis of complex-type N-linked oligosaccharides in many glycoproteins as well as the carbohydrate moieties of glycolipids. In Homo sapiens (Human), this protein is Beta-1,4-galactosyltransferase 3.